A 314-amino-acid chain; its full sequence is METPFAGPWHQFVEDLGQTPCLPGKDLDSILAGWGQLAGTLATRYGFPPPDESVATEDVQLDGLWLRCYTPANATGQEPVGLYFHGGGWVMGGVKEEDGFCRVISRQCQMRLVSVEYRKAPETRYPGALNDGVSAALWAQSRYENQPLVLMGTSAGGNLAFGTALRLIDQDMADKVSGVVALAPITVHPDAVPEHLKEQYTAYEENAELTVNSRAAMQVFFDCYKAPVDDVYTSCLLHPRLLALPKVYIAELGLDTLRDDARLMKGALDTAKVPVMYDAYPGYPHCSFMFPFKSLGEHQRTFLGGVAKAVRWMS.

The Involved in the stabilization of the negatively charged intermediate by the formation of the oxyanion hole motif lies at 85-87; the sequence is HGG. Catalysis depends on residues S154, D255, and H285.

This sequence belongs to the 'GDXG' lipolytic enzyme family.

The enzyme catalyses (2S,3S)-versiconal hemiacetal acetate + H2O = (2S-3S)-versiconal hemiacetal + acetate + H(+). The catalysed reaction is (3S)-versiconol acetate + H2O = (S)-versiconol + acetate + H(+). Its pathway is mycotoxin biosynthesis; aflatoxin biosynthesis. In terms of biological role, versiconal hemiacetal acetate esterase; part of the gene cluster that mediates the biosynthesis of aflatoxins, a group of polyketide-derived furanocoumarins, and part of the most toxic and carcinogenic compounds among the known mycotoxins. The four major aflatoxins produced by A.parasiticus are aflatoxin B1 (AFB1), aflatoxin B2 (AFB2), aflatoxin G1 (AFG1) and aflatoxin G2 (AFG2). Within the aflatoxin pathway, the versiconal hemiacetal acetate esterase aflJ converts versiconal hemiacetal acetate (VHA) into versiconal (VAL). The biosynthesis of aflatoxins begins with the norsolorinic acid synthase aflC that combines a hexanoyl starter unit produced by the fatty acid synthase aflA/aflB and 7 malonyl-CoA extender units to synthesize the precursor NOR. The second step is the conversion of NOR to averantin and requires the norsolorinic acid ketoreductase aflD, which catalyzes the dehydration of norsolorinic acid to form (1'S)-averantin. The norsolorinic acid reductases aflE and aflF may also play a role in the conversion of NOR to AVN. The cytochrome P450 monooxygenase aflG then catalyzes the hydroxylation of AVN to 5'hydroxyaverantin (HAVN). The next step is performed by the 5'-hydroxyaverantin dehydrogenase aflH that transforms HAVN to 5'-oxoaverantin (OAVN) which is further converted to averufin (AVF) by aflK that plays a dual role in the pathway, as a 5'-oxoaverantin cyclase that mediates conversion of 5'-oxoaverantin, as well as a versicolorin B synthase in a later step in the pathway. The averufin oxidase aflI catalyzes the conversion of AVF to versiconal hemiacetal acetate (VHA). VHA is then the substrate for the versiconal hemiacetal acetate esterase aflJ to yield versiconal (VAL). Versicolorin B synthase aflK then converts VAL to versicolorin B (VERB) by closing the bisfuran ring of aflatoxin which is required for DNA-binding, thus giving to aflatoxin its activity as a mutagen. Then, the activity of the versicolorin B desaturase aflL leads to versicolorin A (VERA). A branch point starts from VERB since it can also be converted to dihydrodemethylsterigmatocystin (DMDHST), probably also by aflL, VERA being a precursor for aflatoxins B1 and G1, and DMDHST for aflatoxins B2 and G2. Next, the versicolorin reductase aflM and the cytochrome P450 monooxygenase aflN are involved in conversion of VERA to demethylsterigmatocystin (DMST). AflX and aflY seem also involved in this step, through probable aflX-mediated epoxide ring-opening step following versicolorin A oxidation and aflY-mediated Baeyer-Villiger oxidation required for the formation of the xanthone ring. The methyltransferase aflO then leads to the modification of DMST to sterigmatocystin (ST), and of DMDHST to dihydrosterigmatocystin (DHST). Both ST and DHST are then substrates of the O-methyltransferase aflP to yield O-methylsterigmatocystin (OMST) and dihydro-O-methylsterigmatocystin (DHOMST), respectively. Finally OMST is converted to aflatoxins B1 and G1, and DHOMST to aflatoxins B2 and G2, via the action of several enzymes including O-methylsterigmatocystin oxidoreductase aflQ, the cytochrome P450 monooxygenase aflU, but also the NADH-dependent flavin oxidoreductase nadA which is specifically required for the synthesis of AFG1. The sequence is that of Versiconal hemiacetal acetate esterase from Aspergillus parasiticus (strain ATCC 56775 / NRRL 5862 / SRRC 143 / SU-1).